The sequence spans 300 residues: NADH-cytochrome b5 reductase 1 (300 aa).

The chain crosses the membrane as a helical span at residues 8-28; the sequence is PLVVFATVATIIISFVTLYFF. A compositionally biased stretch (low complexity) spans 34–45; the sequence is SSTTSSSSSSSS. Positions 34–54 are disordered; it reads SSTTSSSSSSSSKSKKGSPAL. One can recognise an FAD-binding FR-type domain in the interval 57-160; it reads DKFQKFPLIS…RGPKGFFTYT (104 aa). FAD contacts are provided by residues 140 to 155 and 166 to 198; these read AEKQ…GPKG and SLGL…KVHL.

Belongs to the flavoprotein pyridine nucleotide cytochrome reductase family. As to quaternary structure, monomer. Component of the 2-(3-amino-3-carboxypropyl)histidine synthase complex composed of DPH1, DPH2, DPH3 and a NADH-dependent reductase, predominantly CBR1. Requires FAD as cofactor.

It localises to the mitochondrion outer membrane. It catalyses the reaction 2 Fe(III)-[cytochrome b5] + NADH = 2 Fe(II)-[cytochrome b5] + NAD(+) + H(+). It carries out the reaction 2 Fe(3+)-[Dph3] + NADH = 2 Fe(2+)-[Dph3] + NAD(+) + H(+). It functions in the pathway protein modification; peptidyl-diphthamide biosynthesis. NADH-dependent reductase for DPH3 and cytochrome b5. Required for the first step of diphthamide biosynthesis, a post-translational modification of histidine which occurs in elongation factor 2. DPH1 and DPH2 transfer a 3-amino-3-carboxypropyl (ACP) group from S-adenosyl-L-methionine (SAM) to a histidine residue, the reaction is assisted by a reduction system comprising DPH3 and a NADH-dependent reductase, predominantly CBR1. By reducing DPH3, also involved in the formation of the tRNA wobble base modification mcm5s 2U (5-methoxycarbonylmethyl-2-thiouridine), mediated by the elongator complex. The cytochrome b5/NADH cytochrome b5 reductase electron transfer system supports the catalytic activity of several sterol biosynthetic enzymes. In Lodderomyces elongisporus (strain ATCC 11503 / CBS 2605 / JCM 1781 / NBRC 1676 / NRRL YB-4239) (Yeast), this protein is NADH-cytochrome b5 reductase 1 (CBR1).